Reading from the N-terminus, the 210-residue chain is Probable septum site-determining protein MinC (210 aa).

This sequence belongs to the MinC family. Interacts with MinD and FtsZ.

Cell division inhibitor that blocks the formation of polar Z ring septums. Rapidly oscillates between the poles of the cell to destabilize FtsZ filaments that have formed before they mature into polar Z rings. Prevents FtsZ polymerization. This chain is Probable septum site-determining protein MinC, found in Thermotoga neapolitana (strain ATCC 49049 / DSM 4359 / NBRC 107923 / NS-E).